Consider the following 1261-residue polypeptide: ABC-type transmembrane transporter verA (1261 aa).

Residues 41–61 traverse the membrane as a helical segment; that stretch reads IGCAFAAVCSGAAMPLMALIL. The ABC transmembrane type-1 1 domain occupies 41–334; it reads IGCAFAAVCS…LGPNMPSFIK (294 aa). N-linked (GlcNAc...) asparagine glycosylation is present at Asn67. 5 helical membrane passes run 92–112, 166–186, 190–210, 270–290, and 308–328; these read LWFV…SFGF, LGIM…AFSQ, LTLV…FIVS, FVGL…AIGF, and ILSV…LGPN. One can recognise an ABC transporter 1 domain in the interval 374–618; sequence VELRDMSFAY…GGLYKRLYDA (245 aa). A glycan (N-linked (GlcNAc...) asparagine) is linked at Asn396. ATP is bound at residue 409-416; the sequence is GPSGAGKS. A glycan (N-linked (GlcNAc...) asparagine) is linked at Asn463. Helical transmembrane passes span 686-706, 734-754, 808-828, 830-850, 913-933, and 950-970; these read YWPI…IFPV, LMFF…GFFM, MGLL…GLAY, WKFA…AGYL, VMTL…ALGF, and FFTV…LFGF. The region spanning 691 to 976 is the ABC transmembrane type-1 2 domain; that stretch reads LIGLVACVVT…LFGFSSNLGK (286 aa). N-linked (GlcNAc...) asparagine glycans are attached at residues Asn1007 and Asn1021. An ABC transporter 2 domain is found at 1017–1255; that stretch reads VDMQNVTFAY…QGNYFKMHES (239 aa). Residue 1052–1059 coordinates ATP; the sequence is GTSGSGKS. An N-linked (GlcNAc...) asparagine glycan is attached at Asn1106.

This sequence belongs to the ABC transporter superfamily. ABCB family. Multidrug resistance exporter (TC 3.A.1.201) subfamily.

The protein resides in the cell membrane. Functionally, ABC-type transmembrane transporter; part of the gene cluster that mediates the biosynthesis of 11'-deoxyverticillin A, one of the dimeric epipolythiodioxopiperazines (ETPs) from the verticillin family that are toxic secondary metabolites. The verA multidrug transporter is probably involved in the secretion of 11'-deoxyverticillin A. The chain is ABC-type transmembrane transporter verA from Clonostachys rogersoniana.